The primary structure comprises 393 residues: NAD(P)H-quinone oxidoreductase subunit H, chloroplastic (393 aa).

This sequence belongs to the complex I 49 kDa subunit family. As to quaternary structure, NDH is composed of at least 16 different subunits, 5 of which are encoded in the nucleus.

Its subcellular location is the plastid. It localises to the chloroplast thylakoid membrane. The enzyme catalyses a plastoquinone + NADH + (n+1) H(+)(in) = a plastoquinol + NAD(+) + n H(+)(out). It catalyses the reaction a plastoquinone + NADPH + (n+1) H(+)(in) = a plastoquinol + NADP(+) + n H(+)(out). Its function is as follows. NDH shuttles electrons from NAD(P)H:plastoquinone, via FMN and iron-sulfur (Fe-S) centers, to quinones in the photosynthetic chain and possibly in a chloroplast respiratory chain. The immediate electron acceptor for the enzyme in this species is believed to be plastoquinone. Couples the redox reaction to proton translocation, and thus conserves the redox energy in a proton gradient. The polypeptide is NAD(P)H-quinone oxidoreductase subunit H, chloroplastic (Spinacia oleracea (Spinach)).